A 120-amino-acid chain; its full sequence is Glycine cleavage system H protein (120 aa).

The region spanning 17 to 99 (VATVGITNYA…QGAGWFFKLK (83 aa)) is the Lipoyl-binding domain. Residue K58 is modified to N6-lipoyllysine.

It belongs to the GcvH family. The glycine cleavage system is composed of four proteins: P, T, L and H. (R)-lipoate serves as cofactor.

Its function is as follows. The glycine cleavage system catalyzes the degradation of glycine. The H protein shuttles the methylamine group of glycine from the P protein to the T protein. This chain is Glycine cleavage system H protein, found in Rhizobium etli (strain ATCC 51251 / DSM 11541 / JCM 21823 / NBRC 15573 / CFN 42).